The chain runs to 343 residues: Flavonoid 4'-O-methyltransferase 4 (343 aa).

D211 provides a ligand contact to S-adenosyl-L-methionine. H249 acts as the Proton acceptor in catalysis.

This sequence belongs to the class I-like SAM-binding methyltransferase superfamily. Cation-independent O-methyltransferase family. As to quaternary structure, homodimer.

It carries out the reaction apigenin + S-adenosyl-L-methionine = acacetin + S-adenosyl-L-homocysteine + H(+). The catalysed reaction is kaempferol + S-adenosyl-L-methionine = kaempferide + S-adenosyl-L-homocysteine + H(+). The enzyme catalyses isorhamnetin + S-adenosyl-L-methionine = 3',4'-O-dimethylquercetin + S-adenosyl-L-homocysteine + 2 H(+). It catalyses the reaction scutellarein + S-adenosyl-L-methionine = scutellarein 4'-methyl ether + S-adenosyl-L-homocysteine + H(+). It carries out the reaction (2S)-naringenin + S-adenosyl-L-methionine = (2S)-naringenin 4'-methyl ether + S-adenosyl-L-homocysteine + H(+). The catalysed reaction is 4',7,8-trihydroxyflavone + S-adenosyl-L-methionine = 7,8-dihydroxy-4'-methoxyflavone + S-adenosyl-L-homocysteine + H(+). The enzyme catalyses taxifolin + S-adenosyl-L-methionine = taxifolin 4'-methyl ether + S-adenosyl-L-homocysteine + H(+). It participates in flavonoid metabolism. In terms of biological role, flavonoid 4'-O-methyltransferase involved in the biosynthesis of polymethoxylated flavonoids natural products such as pebrellin, aroma compounds which contribute to the flavor of peppermint, and exhibit pharmacological activities such as anti-allergic, anti-oxidant, antibacterial, anti-proliferative, and anti-inflammatory effects. Catalyzes S-adenosylmethionine-dependent regioselective 4'-O-methylation of flavonoids; active on various hydroxylated flavonoid substrates, including isorhamnetin, kaempferol, apigenin (API), scutellarein (6-hydroxy-apigenin, 6-OH-API, SCU), taxifolin, 7,8,4'-trihydroxy-flavone and naringenin (NAR), and, with a lower efficiency, quercetin, rhamnetin, luteolin (LUT) and 7,8,3',4'-tetrahydroxy-flavone. The chain is Flavonoid 4'-O-methyltransferase 4 from Mentha piperita (Peppermint).